We begin with the raw amino-acid sequence, 1288 residues long: MANVWGVRLADSLSSPTLESRNRSYTLHDFCSDLDASAGKEPWKALRNQRTSEIVAVRLFRPLQGLILDTHMYGFPGEFDAWEVFVKEKLRVLKYEVLRVYPISGYSNSHVNVFVANALVGAFLSNQAFYDLLPLLIINDTMINDLLGAGVSLAQFFQAHGDVLEVAAGRKYIQMNGYSNDDDDPPLFAKDLSDYAKAFYCESFEVLDRFFWTHDASAGVLVHYDKPTNGNHYLLGTLTQMVSAPPFIINATDAMMLESCVEQFAANAAARPAQPATRLDQCYHLRWGAQYVGEDSLTYRLGVLSLLATNGYQLARPIPKQLTNRWLSSFVSQIMSEGANETPLWPQERYVQIAYDSPSVVDGAVQYGYVRKNQLRLGMRISPIQSLSDVPAPVAWLPQYTIDQTALEDGDMVGHMSQLPLRPEYGSMWVGEALSYYVDYNQSHRVVAAKELPQLPDTYFDGDEQYGRSLFSLARRIGDRSLIKDTAVLKHAYQAIDPSTGREYLRAGQSVAYFGASAGHSGADQPLVIEPWLQGKISGVPSPASIRQFGYDVAKGAIVDLARPFPSGDYQFVYSDVDQVVDGHDDLSISSNLVESILSSCMQATSPGGSFVAKINFPTRSIWYYIEQKILPNITSYMIIKPFVTNNVEVFFVAFGVHRQSSLTWTSGVYFFLVDHFYRYETLSAISRQLPSYGYVDDGSSVTGLEVISIENPGFSTMTQASRVAISALCANTGNSRKTISIYESHGARVLMLVSRRSPASAKRKARLRYLPLIDPRSLEVQSRTIMPSTPVLFENSNGASPHVCLTMMYNYEVSSAVYDGDVVLDLGTGPEAKILELIPPTSPATCVDIRPTAQPTGCWNVRTTFLQLDYLSDGWITGVRGDIVTCMLSLGAAAAGKSMTFDAAFQQFVRVIAQSAANVVLVQVNCPTDVIRSVRGYLEIDQTSKRYRFPKFGRDEPYSDMESLERICRATWPNCSITWVPLSYDLRWTRLALLEAATLNSASIRIAELMYKYMPVMRVDIHGLPMNKSGNFVVGQNCSLTIPGFNAQDTFNCYYNSALAFSTEDVNAAMIPSVTATFDNAKNEWTLDMVFSDAGIYTMQAVVGVNASPIALGSFVVDSPDVDITDAWPAQLDFTIAGTDVDITVNPYYRLMAFVKIDGQWQIANPDKFQFFASATGTLTMNVKLDIADKYLLYYIRDVQSREVGFYIQHPLQLLNTITLPTNEDLFLSAPDMREWAVKESGNTICILNSQGFIPPQDWDVLTDTISWSPSLPTYVVPPGDYTLTPL.

892-899 (GAAAAGKS) serves as a coordination point for ATP.

It belongs to the orthoreovirus lambda-2 protein family. As to quaternary structure, interacts with protein mu-NS; in viral inclusions.

Its subcellular location is the virion. The enzyme catalyses a 5'-end diphospho-ribonucleoside in mRNA + GTP + H(+) = a 5'-end (5'-triphosphoguanosine)-ribonucleoside in mRNA + diphosphate. The catalysed reaction is a 5'-end (5'-triphosphoguanosine)-ribonucleoside in mRNA + S-adenosyl-L-methionine = a 5'-end (N(7)-methyl 5'-triphosphoguanosine)-ribonucleoside in mRNA + S-adenosyl-L-homocysteine. Functionally, outer capsid protein involved in mRNA capping. Catalyzes the last 3 enzymatic activities for formation of the 5' cap structure on the viral plus-strand transcripts, namely the RNA guanylyltransferase, RNA-7N- and RNA-2'O-methyltransferase activities. The chain is Outer capsid protein lambda-2 (L2) from Reovirus type 2 (strain D5/Jones) (T2J).